The chain runs to 212 residues: Protein-L-isoaspartate O-methyltransferase (212 aa).

Ser-60 is a catalytic residue.

This sequence belongs to the methyltransferase superfamily. L-isoaspartyl/D-aspartyl protein methyltransferase family.

Its subcellular location is the cytoplasm. It catalyses the reaction [protein]-L-isoaspartate + S-adenosyl-L-methionine = [protein]-L-isoaspartate alpha-methyl ester + S-adenosyl-L-homocysteine. Functionally, catalyzes the methyl esterification of L-isoaspartyl residues in peptides and proteins that result from spontaneous decomposition of normal L-aspartyl and L-asparaginyl residues. It plays a role in the repair and/or degradation of damaged proteins. The chain is Protein-L-isoaspartate O-methyltransferase from Pseudomonas putida (strain W619).